The following is a 349-amino-acid chain: Protein-glutamate methylesterase/protein-glutamine glutaminase 3 (349 aa).

The 118-residue stretch at 2–119 folds into the Response regulatory domain; it reads DVLIVDDSPV…HPDFERDVES (118 aa). D52 carries the post-translational modification 4-aspartylphosphate. The CheB-type methylesterase domain maps to 157 to 340; it reads EGFQPGVIAI…LSPPRIAALL (184 aa). Catalysis depends on residues S169, H196, and D289.

Belongs to the CheB family. Post-translationally, phosphorylated by CheA. Phosphorylation of the N-terminal regulatory domain activates the methylesterase activity.

It localises to the cytoplasm. It catalyses the reaction [protein]-L-glutamate 5-O-methyl ester + H2O = L-glutamyl-[protein] + methanol + H(+). The catalysed reaction is L-glutaminyl-[protein] + H2O = L-glutamyl-[protein] + NH4(+). In terms of biological role, involved in chemotaxis. Part of a chemotaxis signal transduction system that modulates chemotaxis in response to various stimuli. Catalyzes the demethylation of specific methylglutamate residues introduced into the chemoreceptors (methyl-accepting chemotaxis proteins or MCP) by CheR. Also mediates the irreversible deamidation of specific glutamine residues to glutamic acid. The protein is Protein-glutamate methylesterase/protein-glutamine glutaminase 3 of Hahella chejuensis (strain KCTC 2396).